Reading from the N-terminus, the 150-residue chain is 1,4-dihydroxy-2-naphthoyl-CoA hydrolase (150 aa).

Residue Asp19 is part of the active site.

Belongs to the 4-hydroxybenzoyl-CoA thioesterase family. DHNA-CoA hydrolase subfamily.

The enzyme catalyses 1,4-dihydroxy-2-naphthoyl-CoA + H2O = 1,4-dihydroxy-2-naphthoate + CoA + H(+). It participates in cofactor biosynthesis; phylloquinone biosynthesis. It functions in the pathway quinol/quinone metabolism; 1,4-dihydroxy-2-naphthoate biosynthesis; 1,4-dihydroxy-2-naphthoate from chorismate: step 7/7. Catalyzes the hydrolysis of 1,4-dihydroxy-2-naphthoyl-CoA (DHNA-CoA) to 1,4-dihydroxy-2-naphthoate (DHNA), a reaction involved in phylloquinone (vitamin K1) biosynthesis. The protein is 1,4-dihydroxy-2-naphthoyl-CoA hydrolase of Prochlorococcus marinus (strain AS9601).